Consider the following 775-residue polypeptide: MALADKRLENLQIYRVLQCVRNKDKKQIEKLTRLGYPELINFTEPIDGLSALHLASISNDTDMVSFLLKLGAHPDVQDHMGCTPTMRAAELGHELSMEILAKAKADMTIVDNEGKGVLFYCILPTKRHYRCSLIALEHGADVNNITYEGKPVFLRACEEAHDVKDMCLTFLEKGANPNAINTSTGRTALMESSREGVLEIVRGILERGGEVNAYDNDRHHAAHFAAKGGFFDILKLLFAYNGDMGLIGMDGNTPLHFAAMGGFADCCKYIAQRGCDLKWKNLEHKTPRVVAKDGGFKAASKEIRRAERTAAKLAKTGAKNPNPLWALRLHDWSIEHETSLRNAFKFVDRGDGVVSKDDFVVALEERQEYATSEQLLSVAQMHEKSRGGGVNINEFFKGTKYLSKSYVLGSFGPKKKKRGLGKKPRKGKFVLPLPICTIPENAFPRRPDGGPPYYMIETYQNVSDSHRFNRDHPPEHPIQDDSEWYIDDPSRVFANISFITKAGDLASLKKAIETGIPVDMKDNTYKTPLMIACASGNIDVVKFLIEKGANVNATDNFLWTPLHFACHAGQQDIVELLVKAGASIDATSINNSTPLSRAIESCRLDTVKYLLDMGAKFQIENRKGHAAMDIAKAYADYRIIDMIKEKLDNLPKQADNQKMKGKLPKLKTEGTDVKKEEETLSSIYTVPAITEEKKVHRDSVVYLNSLITSGFTKKVDITFIPKRIWSPEATTAELIRKRELRRERFTYEVDFEDFMMPFQKNITEKAQALEATLKN.

8 ANK repeats span residues 47–76, 184–213, 217–246, 250–279, 524–553, 557–586, 590–619, and 623–652; these read DGLSALHLASISNDTDMVSFLLKLGAHPDV, TGRTALMESSREGVLEIVRGILERGGEVNA, DRHHAAHFAAKGGFFDILKLLFAYNGDMGL, DGNTPLHFAAMGGFADCCKYIAQRGCDLKW, TYKTPLMIACASGNIDVVKFLIEKGANVNA, FLWTPLHFACHAGQQDIVELLVKAGASIDA, NNSTPLSRAIESCRLDTVKYLLDMGAKFQI, and KGHAAMDIAKAYADYRIIDMIKEKLDNLPK.

The sequence is that of Ankyrin repeat and EF-hand domain-containing protein 1 (Ankef1) from Mus musculus (Mouse).